A 236-amino-acid chain; its full sequence is 1-(5-phosphoribosyl)-5-[(5-phosphoribosylamino)methylideneamino] imidazole-4-carboxamide isomerase (236 aa).

Asp8 acts as the Proton acceptor in catalysis. Asp128 acts as the Proton donor in catalysis.

Belongs to the HisA/HisF family.

Its subcellular location is the cytoplasm. It catalyses the reaction 1-(5-phospho-beta-D-ribosyl)-5-[(5-phospho-beta-D-ribosylamino)methylideneamino]imidazole-4-carboxamide = 5-[(5-phospho-1-deoxy-D-ribulos-1-ylimino)methylamino]-1-(5-phospho-beta-D-ribosyl)imidazole-4-carboxamide. It functions in the pathway amino-acid biosynthesis; L-histidine biosynthesis; L-histidine from 5-phospho-alpha-D-ribose 1-diphosphate: step 4/9. The chain is 1-(5-phosphoribosyl)-5-[(5-phosphoribosylamino)methylideneamino] imidazole-4-carboxamide isomerase from Nitrosopumilus maritimus (strain SCM1).